We begin with the raw amino-acid sequence, 144 residues long: Large ribosomal subunit protein uL16 (144 aa).

The protein belongs to the universal ribosomal protein uL16 family. Part of the 50S ribosomal subunit.

Binds 23S rRNA and is also seen to make contacts with the A and possibly P site tRNAs. This is Large ribosomal subunit protein uL16 from Bacillus mycoides (strain KBAB4) (Bacillus weihenstephanensis).